Here is a 571-residue protein sequence, read N- to C-terminus: Septation ring formation regulator EzrA (571 aa).

The Extracellular segment spans residues 1-3 (MYY). The helical transmembrane segment at 4 to 22 (MLIGFIIVVIAVISAGYIL) threads the bilayer. At 23–571 (KRKHYQRINE…ESKVSVDDIE (549 aa)) the chain is on the cytoplasmic side. Coiled coils occupy residues 170–215 (EAKL…QMER), 248–299 (LAQM…TLEH), 326–374 (DALA…ASGE), 400–437 (NFAE…ERER), and 478–529 (RIAE…ENHF).

The protein belongs to the EzrA family.

Its subcellular location is the cell membrane. Negative regulator of FtsZ ring formation; modulates the frequency and position of FtsZ ring formation. Inhibits FtsZ ring formation at polar sites. Interacts either with FtsZ or with one of its binding partners to promote depolymerization. This chain is Septation ring formation regulator EzrA, found in Listeria innocua serovar 6a (strain ATCC BAA-680 / CLIP 11262).